Consider the following 150-residue polypeptide: Ribonuclease H (150 aa).

The region spanning 3–144 (DKDMIEIWTD…ADGLARKGTD (142 aa)) is the RNase H type-1 domain. Mg(2+) contacts are provided by Asp12, Glu50, Asp72, and Asp136. The segment at 129–150 (DEGNERADGLARKGTDEVRGRK) is disordered.

Belongs to the RNase H family. In terms of assembly, monomer. Mg(2+) serves as cofactor.

It is found in the cytoplasm. The catalysed reaction is Endonucleolytic cleavage to 5'-phosphomonoester.. Functionally, endonuclease that specifically degrades the RNA of RNA-DNA hybrids. The sequence is that of Ribonuclease H from Hyphomonas neptunium (strain ATCC 15444).